The chain runs to 206 residues: Large ribosomal subunit protein bL25 (206 aa).

The protein belongs to the bacterial ribosomal protein bL25 family. CTC subfamily. Part of the 50S ribosomal subunit; part of the 5S rRNA/L5/L18/L25 subcomplex. Contacts the 5S rRNA. Binds to the 5S rRNA independently of L5 and L18.

This is one of the proteins that binds to the 5S RNA in the ribosome where it forms part of the central protuberance. This Ralstonia nicotianae (strain ATCC BAA-1114 / GMI1000) (Ralstonia solanacearum) protein is Large ribosomal subunit protein bL25.